Reading from the N-terminus, the 404-residue chain is Tryptophan synthase beta chain (404 aa).

Lysine 98 is subject to N6-(pyridoxal phosphate)lysine.

The protein belongs to the TrpB family. In terms of assembly, tetramer of two alpha and two beta chains. Pyridoxal 5'-phosphate is required as a cofactor.

The catalysed reaction is (1S,2R)-1-C-(indol-3-yl)glycerol 3-phosphate + L-serine = D-glyceraldehyde 3-phosphate + L-tryptophan + H2O. Its pathway is amino-acid biosynthesis; L-tryptophan biosynthesis; L-tryptophan from chorismate: step 5/5. The beta subunit is responsible for the synthesis of L-tryptophan from indole and L-serine. In Rhodopseudomonas palustris (strain ATCC BAA-98 / CGA009), this protein is Tryptophan synthase beta chain.